The sequence spans 288 residues: Formamidopyrimidine-DNA glycosylase (288 aa).

The active-site Schiff-base intermediate with DNA is the P2. E3 acts as the Proton donor in catalysis. K59 acts as the Proton donor; for beta-elimination activity in catalysis. DNA is bound by residues H93, R112, and K168. The FPG-type zinc-finger motif lies at 254–288; that stretch reads NVYGRGGEPCKRCGAPIKRVVVGGRSTHYCATCQR. R278 serves as the catalytic Proton donor; for delta-elimination activity.

This sequence belongs to the FPG family. In terms of assembly, monomer. Zn(2+) serves as cofactor.

It catalyses the reaction Hydrolysis of DNA containing ring-opened 7-methylguanine residues, releasing 2,6-diamino-4-hydroxy-5-(N-methyl)formamidopyrimidine.. The catalysed reaction is 2'-deoxyribonucleotide-(2'-deoxyribose 5'-phosphate)-2'-deoxyribonucleotide-DNA = a 3'-end 2'-deoxyribonucleotide-(2,3-dehydro-2,3-deoxyribose 5'-phosphate)-DNA + a 5'-end 5'-phospho-2'-deoxyribonucleoside-DNA + H(+). Functionally, involved in base excision repair of DNA damaged by oxidation or by mutagenic agents. Acts as a DNA glycosylase that recognizes and removes damaged bases. Has a preference for oxidized purines, such as 7,8-dihydro-8-oxoguanine (8-oxoG). Has AP (apurinic/apyrimidinic) lyase activity and introduces nicks in the DNA strand. Cleaves the DNA backbone by beta-delta elimination to generate a single-strand break at the site of the removed base with both 3'- and 5'-phosphates. The polypeptide is Formamidopyrimidine-DNA glycosylase (Corynebacterium jeikeium (strain K411)).